The following is a 61-amino-acid chain: Large ribosomal subunit protein bL28 (61 aa).

It belongs to the bacterial ribosomal protein bL28 family.

The sequence is that of Large ribosomal subunit protein bL28 from Nautilia profundicola (strain ATCC BAA-1463 / DSM 18972 / AmH).